Here is a 78-residue protein sequence, read N- to C-terminus: U-scoloptoxin(04)-Er1e (78 aa).

A signal peptide spans Met-1–Ala-24. A propeptide spanning residues Arg-25–Arg-28 is cleaved from the precursor.

This sequence belongs to the scoloptoxin-04 family. Contains 2 disulfide bonds. As to expression, expressed by the venom gland.

The protein resides in the secreted. This chain is U-scoloptoxin(04)-Er1e, found in Ethmostigmus rubripes (Giant centipede).